We begin with the raw amino-acid sequence, 1007 residues long: Serine/threonine-protein kinase PRP4 homolog (1007 aa).

A disordered region spans residues 1 to 104 (MAATEPPSLR…PAKRTKLDDL (104 aa)). Residue Ala2 is modified to N-acetylalanine. 4 positions are modified to phosphoserine: Ser8, Ser21, Ser24, and Ser33. Composition is skewed to basic residues over residues 40-60 (KHSR…KHKH) and 68-82 (KKHK…HKRK). Over residues 83–92 (EVLDASDKEG) the composition is skewed to basic and acidic residues. Ser88 and Ser94 each carry phosphoserine. Lys100 bears the N6-acetyllysine; alternate mark. Lys100 participates in a covalent cross-link: Glycyl lysine isopeptide (Lys-Gly) (interchain with G-Cter in SUMO2); alternate. Lys112 is covalently cross-linked (Glycyl lysine isopeptide (Lys-Gly) (interchain with G-Cter in SUMO2)). Residue Lys118 forms a Glycyl lysine isopeptide (Lys-Gly) (interchain with G-Cter in SUMO2); alternate linkage. Lys118 is covalently cross-linked (Glycyl lysine isopeptide (Lys-Gly) (interchain with G-Cter in SUMO1); alternate). At Ser132 the chain carries Phosphoserine. Tyr141 bears the Phosphotyrosine mark. Disordered regions lie at residues 141 to 535 (YESG…EDEE) and 560 to 583 (NISV…SPDD). Phosphoserine is present on residues Ser143, Ser145, and Ser167. Positions 158–169 (GNRSSTRSSSTR) are enriched in low complexity. Residues Lys171 and Lys178 each participate in a glycyl lysine isopeptide (Lys-Gly) (interchain with G-Cter in SUMO2) cross-link. Composition is skewed to basic residues over residues 180-203 (SAKK…RKSK) and 215-231 (RSKS…SKRS). 6 positions are modified to phosphoserine: Ser240, Ser242, Ser258, Ser278, Ser292, and Ser294. A compositionally biased stretch (basic and acidic residues) spans 248-271 (RSQEKVGKARSPADEKIKSEEKGK). The segment covering 294 to 303 (SPVDLRDKSK) has biased composition (basic and acidic residues). Residues 304 to 315 (DRRSRSKERKSK) are compositionally biased toward basic residues. Positions 316–325 (RSEIDKEKKP) are enriched in basic and acidic residues. Phosphoserine is present on residues Ser328, Ser354, Ser356, Ser366, and Ser368. A compositionally biased stretch (basic residues) spans 342 to 367 (PSRRPGRSPKRRSLSPKQRDKSRRSR). Thr385 is modified (phosphothreonine). Phosphoserine is present on Ser387. 2 stretches are compositionally biased toward basic and acidic residues: residues 395 to 408 (RSLE…ERRR) and 415 to 429 (RPRD…RSKD). Phosphoserine is present on residues Ser427, Ser431, and Ser437. Residues 438–497 (PSRRRSRSPIRRRSRSPLRRSRSPRRRSRSPRRRDRSRRSRSRLRRRSRSRGGHRRRSRS) are compositionally biased toward basic residues. Ser518, Ser519, Ser520, Ser565, Ser569, Ser576, Ser578, and Ser580 each carry phosphoserine. The segment covering 518–535 (SSSDDNLEDFDVEEEDEE) has biased composition (acidic residues). The segment covering 562–581 (SVPSEPSSPQSSTRSRSPSP) has biased composition (low complexity). Glycyl lysine isopeptide (Lys-Gly) (interchain with G-Cter in SUMO2) cross-links involve residues Lys593 and Lys659. The 317-residue stretch at 687–1003 (YNVYGYTGQG…INQALQHAFI (317 aa)) folds into the Protein kinase domain. Residues 693 to 701 (TGQGVFSNV) and Lys717 each bind ATP. At Lys717 the chain carries N6-acetyllysine. The active-site Proton acceptor is the Asp815. Tyr849 is subject to Phosphotyrosine. At Ser852 the chain carries Phosphoserine.

The protein belongs to the protein kinase superfamily. CMGC Ser/Thr protein kinase family. As to quaternary structure, interacts with CLK1 C-terminus. Associates with the U5 snRNP and NCOR1 deacetylase complexes. Identified in the spliceosome C complex. In terms of processing, phosphorylated by CLK1. Autophosphorylated; phosphorylation inhibits interaction with its targets, such as PRPF6 or SMARCA4.

It is found in the nucleus. Its subcellular location is the chromosome. The protein resides in the centromere. It localises to the kinetochore. The enzyme catalyses L-seryl-[protein] + ATP = O-phospho-L-seryl-[protein] + ADP + H(+). It carries out the reaction L-threonyl-[protein] + ATP = O-phospho-L-threonyl-[protein] + ADP + H(+). Serine/threonine kinase involved in spliceosomal assembly as well as mitosis and signaling regulation. Connects chromatin mediated regulation of transcription and pre-mRNA splicing. During spliceosomal assembly, interacts with and phosphorylates PRPF6 and PRPF31, components of the U4/U6-U5 tri-small nuclear ribonucleoprotein (snRNP), to facilitate the formation of the spliceosome B complex. Plays a role in regulating transcription and the spindle assembly checkpoint (SAC). Associates with U5 snRNP and NCOR1 deacetylase complexes which may allow a coordination of pre-mRNA splicing with chromatin remodeling events involved in transcriptional regulation. Associates and probably phosphorylates SMARCA4 and NCOR1. Phosphorylates SRSF1. Associates with kinetochores during mitosis and is necessary for recruitment and maintenance of the checkpoint proteins such as MAD1L1 and MAD12L1 at the kinetochores. Phosphorylates and regulates the activity of the transcription factors such as ELK1 and KLF13. Phosphorylates nuclear YAP1 and WWTR1/TAZ which induces nuclear exclusion and regulates Hippo signaling pathway, involved in tissue growth control. This chain is Serine/threonine-protein kinase PRP4 homolog (Prp4k), found in Rattus norvegicus (Rat).